The following is a 730-amino-acid chain: Cyclin-T2 (730 aa).

The segment at 1–300 is interaction with MDFIC and MDFI; the sequence is MASGRGASSR…SVTGVPTNPS (300 aa). The Cyclin N-terminal domain occupies 12–147; that stretch reads FFTREQLENT…IMLQTLGFEI (136 aa). An interaction with POLR2A region spans residues 250-300; it reads RLKKIRNWRANQAARKPKVDGQVSETPLLGSSLVQNSILVDSVTGVPTNPS. 2 stretches are compositionally biased toward polar residues: residues 341 to 350 and 360 to 389; these read TSYGLSSHQE and TEQL…SISL. Residues 341–430 form a disordered region; sequence TSYGLSSHQE…GPISTTPGII (90 aa). Over residues 398 to 412 the composition is skewed to basic and acidic residues; sequence DKISDHSSVKQEYTH. Residue Lys407 forms a Glycyl lysine isopeptide (Lys-Gly) (interchain with G-Cter in SUMO2) linkage. A Phosphoserine modification is found at Ser480. The disordered stretch occupies residues 497 to 652; the sequence is DKKEKSGSLK…SSSSSSSSVK (156 aa). Basic and acidic residues-rich tracts occupy residues 517–543 and 552–565; these read SASK…EGSG and ISRD…EHPS. The segment covering 566–578 has biased composition (basic residues); that stretch reads SRHHTSSHKHSHS. Residues 579–588 are compositionally biased toward low complexity; that stretch reads HSGSSSGGSK. The residue at position 601 (Ser601) is a Phosphoserine. 2 stretches are compositionally biased toward low complexity: residues 606-616 and 637-652; these read SSDGISSSSSS and SSKS…SSVK.

Belongs to the cyclin family. Cyclin C subfamily. Interacts with CDK9 to form P-TEFb. Interacts with POLR2A (via the C-terminal domain (CTD)); mediates transcriptional activity. Interacts with HEXIM1; mediates formation of a tripartite complex with KPNA2. Interacts with HEXIM2. Interacts with PKN1; enhances MYOD1-dependent transcription. P-TEFB complex interacts with RB1; promotes phosphorylation of RB1. P-TEFB complex interacts with MYOD1; promotes the transcriptional activity of MYOD1 through its CDK9-mediated phosphorylation. Interacts with MDFI and MDFIC. Interacts with MON1B; down-regulates CCNT2-mediated activation of viral promoters during herpes simplex virus 1/HHV-1 infection. As to quaternary structure, (Microbial infection) Interacts with HIV-2 and SIV Tat. Does not bind efficiently to the transactivation domain of the HIV-1 Tat. As to expression, ubiquitously expressed.

Its subcellular location is the cytoplasm. It is found in the perinuclear region. The protein localises to the nucleus. Its function is as follows. Regulatory subunit of the cyclin-dependent kinase pair (CDK9/cyclin T) complex, also called positive transcription elongation factor B (P-TEFB), which is proposed to facilitate the transition from abortive to production elongation by phosphorylating the CTD (carboxy-terminal domain) of the large subunit of RNA polymerase II (RNAP II). The activity of this complex is regulated by binding with 7SK snRNA. Plays a role during muscle differentiation; P-TEFB complex interacts with MYOD1; this tripartite complex promotes the transcriptional activity of MYOD1 through its CDK9-mediated phosphorylation and binds the chromatin of promoters and enhancers of muscle-specific genes; this event correlates with hyperphosphorylation of the CTD domain of RNA pol II. In addition, enhances MYOD1-dependent transcription through interaction with PKN1. Involved in early embryo development. In terms of biological role, (Microbial infection) Promotes transcriptional activation of early and late herpes simplex virus 1/HHV-1 promoters. The polypeptide is Cyclin-T2 (Homo sapiens (Human)).